The chain runs to 347 residues: MAFLCKSNDNTKVSMEIEKSIKDDKRTFLGITQVLLLGAGESGKSTIFKQLKILQENGLWTTKELQEFSNTIYINIITQLQVLINAAESIGIQLQPENIQLSKDYLELNHSSVTWTKEIGENSVRLWNDSGIKSTFEKRDKEFQLNDSAEYFFNNLQRVTQDNYIPTPQDALRARVTTKGIIEADVTFDNINMKIIDVGGQRSQRRKWIHCFDKVSAVIYVAGLSEYDQALREDINVNKMDESLSLFKEICNSKWFDSSSIILFLNKKDMFIEKLKRVPFKTYDKKYTGENSFEAVSLHIQRKFESVKIDPNKKIYTHFTIAVDTENIEFVFKVIKKIIVGHVMDLV.

Residues 30-347 enclose the G-alpha domain; that stretch reads GITQVLLLGA…IIVGHVMDLV (318 aa). The tract at residues 33-46 is G1 motif; sequence QVLLLGAGESGKST. GTP contacts are provided by residues 38 to 45, 172 to 178, 197 to 201, 266 to 269, and alanine 322; these read GAGESGKS, LRARVTT, DVGGQ, and NKKD. The Mg(2+) site is built by serine 45 and threonine 178. The segment at 170–178 is G2 motif; sequence DALRARVTT. A G3 motif region spans residues 193-202; it reads MKIIDVGGQR. The G4 motif stretch occupies residues 262 to 269; sequence ILFLNKKD. Residues 320–325 are G5 motif; sequence TIAVDT.

It belongs to the G-alpha family. In terms of assembly, g proteins are composed of 3 units; alpha, beta and gamma. The alpha chain contains the guanine nucleotide binding site.

Functionally, guanine nucleotide-binding proteins (G proteins) are involved as modulators or transducers in various transmembrane signaling systems. G alpha-6 is involved in the folic acid chemotaxis signal transduction pathway. In Dictyostelium discoideum (Social amoeba), this protein is Guanine nucleotide-binding protein alpha-6 subunit (gpaF).